The following is a 702-amino-acid chain: Methionine--tRNA ligase (702 aa).

Positions 14–24 (PYANGPVHLGH) match the 'HIGH' region motif. Zn(2+)-binding residues include cysteine 146, cysteine 149, cysteine 159, and cysteine 162. A 'KMSKS' region motif is present at residues 344–348 (KFSKS). Lysine 347 contributes to the ATP binding site. The tRNA-binding domain occupies 601–702 (DFLKVDLRVA…GDEINGQQIQ (102 aa)).

This sequence belongs to the class-I aminoacyl-tRNA synthetase family. MetG type 1 subfamily. As to quaternary structure, homodimer. Zn(2+) is required as a cofactor.

The protein resides in the cytoplasm. It carries out the reaction tRNA(Met) + L-methionine + ATP = L-methionyl-tRNA(Met) + AMP + diphosphate. In terms of biological role, is required not only for elongation of protein synthesis but also for the initiation of all mRNA translation through initiator tRNA(fMet) aminoacylation. The sequence is that of Methionine--tRNA ligase from Chlorobium limicola (strain DSM 245 / NBRC 103803 / 6330).